Consider the following 150-residue polypeptide: Infection structure-specific protein 24 (150 aa).

Involved in the development of infection structures. The germ tube elongates across the leaf surface of the infected plant until it recognizes a stomate. Physical stimuli provided by the stomate induce differentiation of the germ tube to form a series of infection structures involved in host colonization. The polypeptide is Infection structure-specific protein 24 (INF24) (Uromyces appendiculatus (Rust fungus)).